A 176-amino-acid chain; its full sequence is RNA 2',3'-cyclic phosphodiesterase (176 aa).

The Proton donor role is filled by histidine 39. 2 consecutive short sequence motifs (HXTX) follow at residues 39–42 and 122–125; these read HITL and HLTV. Histidine 122 (proton acceptor) is an active-site residue.

The protein belongs to the 2H phosphoesterase superfamily. ThpR family.

It carries out the reaction a 3'-end 2',3'-cyclophospho-ribonucleotide-RNA + H2O = a 3'-end 2'-phospho-ribonucleotide-RNA + H(+). In terms of biological role, hydrolyzes RNA 2',3'-cyclic phosphodiester to an RNA 2'-phosphomonoester. The polypeptide is RNA 2',3'-cyclic phosphodiesterase (Archaeoglobus fulgidus (strain ATCC 49558 / DSM 4304 / JCM 9628 / NBRC 100126 / VC-16)).